The chain runs to 377 residues: MPIISLPADPTSPSQSLTPFPIQLDTKDGKAGKLLKQIRIRYLNEPNSRHTPITFINTYGFVYARDTSGGIHSEISSDLAAGSITACMMKLGPGPNIQNANLVLRSLNEFYVKVKKTSSQREEAVFELVNIPTLLREHALCKRKMLVCSAEKFLKNPSKLQAGFEYVYIPTFVSITYSPRNLNYQVARPILKFRSRFVYSIHLELILRLLCKSDSPLMKSYNADRTGRGCLASVWIHVCNILKNKSIKQQGRESYFIAKCMSMQLQVSIADLWGPTIIIKSLGHIPKTALPFFSKDGIACHPLQDVSPNLAKSLWSVGCEIESAKLILQESDLNELMGHQDLITDKIAIRSGQRTFERSKFSPFKKYASIPNLEAIN.

The protein belongs to the morbillivirus/respirovirus/rubulavirus M protein family.

Its subcellular location is the virion. Its function is as follows. The M protein has a crucial role in virus assembly and interacts with the RNP complex as well as with the viral membrane. This chain is Matrix protein (M), found in Homo sapiens (Human).